We begin with the raw amino-acid sequence, 966 residues long: LRR receptor-like serine/threonine-protein kinase ERL1 (966 aa).

The first 25 residues, 1–25, serve as a signal peptide directing secretion; sequence MKEKMQRMVLSLAMVGFMVFGVASA. Residues 26-582 are Extracellular-facing; the sequence is MNNEGKALMA…PLPKSRVFSR (557 aa). An LRR 1 repeat occupies 40–63; that stretch reads FSNLVNMLLDWDDVHNSDLCSWRG. Residues N68 and N77 are each glycosylated (N-linked (GlcNAc...) asparagine). LRR repeat units follow at residues 75 to 94, 95 to 118, 120 to 142, 143 to 166, 168 to 190, 192 to 214, 215 to 238, 239 to 261, 262 to 285, 286 to 311, 313 to 333, 334 to 357, 359 to 381, 383 to 404, 405 to 429, 431 to 453, 454 to 476, 478 to 500, 501 to 525, and 527 to 550; these read SLNL…IGDL, RNLQ…IGNC, SLVY…ISKL, KQLE…LTQI, NLKR…LYWN, VLQY…MCQL, TGLW…IGNC, TSFQ…NIGF, LQVA…IGLM, QALA…NLSF, GKLY…LGNM, SRLS…LGKL, QLFE…ISSC, ALNQ…AFRN, LGSL…LGHI, NLDK…LGDL, EHLL…EFGN, RSIQ…ELGQ, LQNL…LTNC, and TLVN…NFSR. N-linked (GlcNAc...) asparagine glycans are attached at residues N226 and N237. N308 and N332 each carry an N-linked (GlcNAc...) asparagine glycan. N377 carries an N-linked (GlcNAc...) asparagine glycan. N412, N441, and N460 each carry an N-linked (GlcNAc...) asparagine glycan. N-linked (GlcNAc...) asparagine glycosylation is found at N532, N537, and N547. The helical transmembrane segment at 583-603 threads the bilayer; the sequence is GALICIVLGVITLLCMIFLAV. Residues 604–966 are Cytoplasmic-facing; it reads YKSMQQKKIL…FREVISKSSI (363 aa). Phosphothreonine is present on residues T637 and T645. Positions 648–921 constitute a Protein kinase domain; the sequence is LNEKFIIGYG…RVLLSLVPSL (274 aa). ATP-binding positions include 654-662 and K676; that span reads IGYGASSTV. Phosphotyrosine is present on residues Y721 and Y760. D773 serves as the catalytic Proton acceptor. Y815 carries the phosphotyrosine modification. T823 is modified (phosphothreonine).

Belongs to the protein kinase superfamily. Ser/Thr protein kinase family. As to quaternary structure, homodimer and heterodimer with ERECTA and TMM. Interacts with EPF1 and EPF2. Interacts with SERK1, SERK2, SERK3/BAK1 and SERK4 in a EPF1-induced manner. In terms of tissue distribution, mostly expressed in developing organs, including bud clusters, flowers, siliques and young rosettes. Also detected in mature aboveground organs, such as leaves, stems and pedicels, but barely in roots.

It localises to the cell membrane. The enzyme catalyses L-seryl-[protein] + ATP = O-phospho-L-seryl-[protein] + ADP + H(+). It carries out the reaction L-threonyl-[protein] + ATP = O-phospho-L-threonyl-[protein] + ADP + H(+). Its function is as follows. Receptor kinase that regulates inflorescence architecture and organ shape as well as stomatal patterning, including density and clustering, together with ER and ERL2. Redundantly involved with ER in procambial development regulation. Forms a functional ligand-receptor pair with EPF1 (AC Q8S8I4). Forms a constitutive complex with TMM involved in the recognition of the stomatal regulatory peptides EPF1, EPF2 and EPFL9/STOMAGEN. The chain is LRR receptor-like serine/threonine-protein kinase ERL1 from Arabidopsis thaliana (Mouse-ear cress).